The following is a 521-amino-acid chain: Cytochrome P450 1A1 (521 aa).

Phe229 provides a ligand contact to substrate. Position 463 (Cys463) interacts with heme.

Belongs to the cytochrome P450 family. Heme serves as cofactor.

The protein resides in the endoplasmic reticulum membrane. Its subcellular location is the microsome membrane. The catalysed reaction is an organic molecule + reduced [NADPH--hemoprotein reductase] + O2 = an alcohol + oxidized [NADPH--hemoprotein reductase] + H2O + H(+). Cytochromes P450 are a group of heme-thiolate monooxygenases. They oxidize a variety of structurally unrelated compounds, including steroids, fatty acids, and xenobiotics. The chain is Cytochrome P450 1A1 (cyp1a1) from Oryzias latipes (Japanese rice fish).